The following is a 140-amino-acid chain: Transcription antitermination protein NusB (140 aa).

This sequence belongs to the NusB family.

Its function is as follows. Involved in transcription antitermination. Required for transcription of ribosomal RNA (rRNA) genes. Binds specifically to the boxA antiterminator sequence of the ribosomal RNA (rrn) operons. The polypeptide is Transcription antitermination protein NusB (Alteromonas mediterranea (strain DSM 17117 / CIP 110805 / LMG 28347 / Deep ecotype)).